A 990-amino-acid polypeptide reads, in one-letter code: Kinesin-related protein 5 (990 aa).

The Kinesin motor domain occupies 6 to 330 (NIRVMCRFRP…LKFGARAKSI (325 aa)). An ATP-binding site is contributed by 83–90 (GQTGSGKT). Disordered regions lie at residues 401 to 485 (QSNS…SSID) and 732 to 788 (FSSS…QDQQ). The span at 406-418 (SGGGGSGSSGGSS) shows a compositional bias: gly residues. Low complexity-rich tracts occupy residues 466–485 (TSSISSSSISSMSSLSSSID) and 733–781 (SSSN…PSSN). Residues 513–948 (IEMEKMKEDT…DQLISTQRLI (436 aa)) are a coiled coil.

It belongs to the TRAFAC class myosin-kinesin ATPase superfamily. Kinesin family. Kinesin subfamily. Interacts with actin.

The protein resides in the cytoplasm. Its subcellular location is the cytoskeleton. Microtubule-associated force-producing protein that plays a role in organelle transport. Its motor activity is directed toward the microtubule's plus end. May connect microtubules to actin filaments. Associates with actin-based structures in cells and is likely involved in the organization of actin cytoskeletons in such structures. The protein is Kinesin-related protein 5 (kif5) of Dictyostelium discoideum (Social amoeba).